The primary structure comprises 292 residues: Cyclic dipurine nucleotide synthase (292 aa).

Glutamine 47 lines the ATP pocket. 48–52 (GSYRN) contacts GTP. Mg(2+) contacts are provided by aspartate 61 and aspartate 63. ATP is bound by residues aspartate 63, 121-122 (NK), and aspartate 136. Position 136 (aspartate 136) interacts with Mg(2+). Residues lysine 197 and serine 216 each coordinate GTP.

The protein belongs to the CD-NTase family. E01 subfamily. It depends on Mg(2+) as a cofactor.

The catalysed reaction is 2 ATP = 3',3'-c-di-AMP + 2 diphosphate. It catalyses the reaction 2 GTP = 3',3'-c-di-GMP + 2 diphosphate. The enzyme catalyses GTP + ATP = 3',3'-cGAMP + 2 diphosphate. In terms of biological role, cyclic nucleotide synthase (second messenger synthase) of a CBASS antivirus system. CBASS (cyclic oligonucleotide-based antiphage signaling system) provides immunity against bacteriophage. The CD-NTase protein synthesizes cyclic nucleotides in response to infection; these serve as specific second messenger signals. The signals activate a diverse range of effectors, leading to bacterial cell death and thus abortive phage infection. A type I-A(GA) CBASS system. Cyclic dinucleotide synthase that catalyzes the synthesis of 3'3'-cyclic GMP-AMP (cGAMP) from GTP and ATP, and of c-di-AMP and c-di-GMP, that are second messengers for cell signal transduction. The polypeptide is Cyclic dipurine nucleotide synthase (Elizabethkingia meningoseptica (Chryseobacterium meningosepticum)).